We begin with the raw amino-acid sequence, 928 residues long: DNA polymerase I (928 aa).

Residues 1–323 (MVQIPQNPLI…ADEAPEVTAT (323 aa)) enclose the 5'-3' exonuclease domain. Residues 324-517 (VISYDNYVTI…LHLKMWPDLQ (194 aa)) form the 3'-5' exonuclease domain. The klenow fragment stretch occupies residues 324-928 (VISYDNYVTI…GSGENWDQAH (605 aa)). Residues 521-928 (GPLNVFENIE…GSGENWDQAH (408 aa)) are polymerase.

This sequence belongs to the DNA polymerase type-A family. As to quaternary structure, single-chain monomer with multiple functions.

The catalysed reaction is DNA(n) + a 2'-deoxyribonucleoside 5'-triphosphate = DNA(n+1) + diphosphate. Its function is as follows. In addition to polymerase activity, this DNA polymerase exhibits 3'-5' and 5'-3' exonuclease activity. It is able to utilize nicked circular duplex DNA as a template and can unwind the parental DNA strand from its template. Genetic interactions among priB, dam, lexA, nagC, polA, rdgB, rdgB, rep and uup link the PriA-PriB replication restart pathway to DNA double-strand break repair. This is DNA polymerase I (polA) from Escherichia coli (strain K12).